A 165-amino-acid polypeptide reads, in one-letter code: Nucleotide-binding protein CFF8240_1664 (165 aa).

The protein belongs to the YajQ family.

Functionally, nucleotide-binding protein. The polypeptide is Nucleotide-binding protein CFF8240_1664 (Campylobacter fetus subsp. fetus (strain 82-40)).